Here is a 41-residue protein sequence, read N- to C-terminus: Ostricacin-2 (41 aa).

Intrachain disulfides connect C8/C36, C15/C30, and C20/C37.

Its subcellular location is the secreted. Its function is as follows. Has antibacterial activity against the Gram-positive bacterium S.aureus 1056 MRSA (MIC=1.25 ug/ml) and the Gram-negative bacterium E.coli O157:H7 (MIC=0.96 ug/ml). Has antifungal activity against the yeast C.albicans 3153A (MIC=6.20 ug/ml). The polypeptide is Ostricacin-2 (Struthio camelus (Common ostrich)).